We begin with the raw amino-acid sequence, 176 residues long: Nucleoside triphosphate/diphosphate phosphatase (176 aa).

Arginine 23 serves as the catalytic Proton donor. 6 residues coordinate Mg(2+): asparagine 87, aspartate 103, aspartate 105, aspartate 107, aspartate 120, and glutamate 123.

The protein belongs to the Ntdp family. Requires Mg(2+) as cofactor.

The catalysed reaction is a ribonucleoside 5'-triphosphate + H2O = a ribonucleoside 5'-diphosphate + phosphate + H(+). It carries out the reaction a ribonucleoside 5'-diphosphate + H2O = a ribonucleoside 5'-phosphate + phosphate + H(+). In terms of biological role, has nucleoside phosphatase activity towards nucleoside triphosphates and nucleoside diphosphates. The chain is Nucleoside triphosphate/diphosphate phosphatase from Bacillus anthracis (strain A0248).